A 168-amino-acid chain; its full sequence is Protein-export protein SecB (168 aa).

Belongs to the SecB family. Homotetramer, a dimer of dimers. One homotetramer interacts with 1 SecA dimer.

It localises to the cytoplasm. Functionally, one of the proteins required for the normal export of preproteins out of the cell cytoplasm. It is a molecular chaperone that binds to a subset of precursor proteins, maintaining them in a translocation-competent state. It also specifically binds to its receptor SecA. The protein is Protein-export protein SecB of Rhizobium meliloti (strain 1021) (Ensifer meliloti).